The chain runs to 292 residues: 4-hydroxy-tetrahydrodipicolinate synthase (292 aa).

Position 45 (threonine 45) interacts with pyruvate. The active-site Proton donor/acceptor is tyrosine 133. Residue lysine 161 is the Schiff-base intermediate with substrate of the active site. Residue isoleucine 203 participates in pyruvate binding.

Belongs to the DapA family. Homotetramer; dimer of dimers.

The protein localises to the cytoplasm. It catalyses the reaction L-aspartate 4-semialdehyde + pyruvate = (2S,4S)-4-hydroxy-2,3,4,5-tetrahydrodipicolinate + H2O + H(+). Its pathway is amino-acid biosynthesis; L-lysine biosynthesis via DAP pathway; (S)-tetrahydrodipicolinate from L-aspartate: step 3/4. Catalyzes the condensation of (S)-aspartate-beta-semialdehyde [(S)-ASA] and pyruvate to 4-hydroxy-tetrahydrodipicolinate (HTPA). The polypeptide is 4-hydroxy-tetrahydrodipicolinate synthase (Shigella flexneri).